Consider the following 167-residue polypeptide: Caffeine dehydrogenase subunit gamma (167 aa).

The 2Fe-2S ferredoxin-type domain occupies His-4 to Leu-80. [2Fe-2S] cluster-binding residues include Cys-42, Cys-47, Cys-50, and Cys-62.

As to quaternary structure, heterotrimer composed of an alpha (CdhA), a beta (CdhB) and a gamma (CdhC) subunit.

The enzyme catalyses caffeine + a ubiquinone + H2O = 1,3,7-trimethylurate + a ubiquinol. It carries out the reaction ubiquinone-0 + caffeine + H2O = ubiquinol-0 + 1,3,7-trimethylurate. The catalysed reaction is theobromine + a ubiquinone + H2O = 3,7-dimethylurate + a ubiquinol. In terms of biological role, component of the caffeine dehydrogenase complex that catalyzes the hydrolytical oxidation of 1,3,7-trimethylxanthine (caffeine) by incorporation of an oxygen atom originating from a water molecule into position C-8 to produce 1,3,7-trimethyluric acid (TMU). Coenzyme Q0 (ubiquinone-0) is the preferred electron acceptor and, to a lesser extent, coenzyme Q2 (ubiquinone-2) can also be used, but oxygen and NAD(P)(+) cannot. Is involved in a caffeine degradation pathway that allows Pseudomonas sp. strain CBB1 to grow on caffeine as the sole carbon and nitrogen source. Is also active with theobromine as substrate, but shows a very poor activity with theophylline and is not active with xanthine, 3-methylxanthine, 7-methylxanthine, TMU, and 3,7-dimethylurate. The sequence is that of Caffeine dehydrogenase subunit gamma from Pseudomonas sp. (strain CBB1).